We begin with the raw amino-acid sequence, 639 residues long: Immunoglobulin-like domain-containing receptor 2 (639 aa).

An N-terminal signal peptide occupies residues 1 to 20; sequence MDRVLLRWISLFWLTAMVEG. An Ig-like V-type domain is found at 21–162; sequence LQVTVPDKKK…LEGKNEDSVE (142 aa). The Lumenal portion of the chain corresponds to 21–186; that stretch reads LQVTVPDKKK…PSFAVEIMPE (166 aa). Residues cysteine 42 and cysteine 145 are joined by a disulfide bond. The helical transmembrane segment at 187 to 207 threads the bilayer; it reads WVFVGLVLLGVFLFFVLVGIC. Residues 208–639 are Cytoplasmic-facing; sequence WCQCCPHSCC…DFPTRMSLVV (432 aa). Disordered stretches follow at residues 273 to 295, 374 to 415, and 437 to 639; these read LMDKPHPPPLAPSDSTGGSHSVR, WSGV…MLSR, and YGQR…SLVV. 2 stretches are compositionally biased toward basic and acidic residues: residues 393 to 414 and 442 to 464; these read YNKEDRESFRHSQPRSKSEMLS and RRADGNSHEARGGSRFERSESRA. Position 473 is a phosphoserine (serine 473). Basic and acidic residues predominate over residues 483–493; sequence RSREPLTDADR. An Omega-N-methylarginine modification is found at arginine 544. Serine 579 bears the Phosphoserine mark. Residues 606–617 are compositionally biased toward basic and acidic residues; that stretch reads RGRDLPYHSNSE.

The protein belongs to the immunoglobulin superfamily. LISCH7 family. Interacts with MARVELD2 and OCLN. Interacts with P4HB AND HSPA5; the interaction with HSPA5 stabilizes ILDR2 expression. Interacts (via C-terminus) with TRA2A, TRA2B and SRSF1. In terms of tissue distribution, expressed in testis, brain, pituitary, colon, heart, nerves, prostate, esophagus, lung liver and small intestine. Highly expressed in macrophages, also expressed in monocytes and at low levels in NK and NKT cells (at protein level).

The protein localises to the endoplasmic reticulum membrane. It is found in the cell junction. The protein resides in the tight junction. Its subcellular location is the nucleus. Its function is as follows. May be involved in ER stress pathways with effects on lipid homeostasis and insulin secretion. With ILDR1 and LSR, involved in the maintain of the epithelial barrier function through the recruitment of MARVELD2/tricellulin to tricellular tight junctions. Also functions as a B7-like protein family member expressed on immune cells and inflamed tissue and with T-cell inhibitory activity. In the inner ear, may regulate alternative pre-mRNA splicing via binding to TRA2A, TRA2B and SRSF1. The protein is Immunoglobulin-like domain-containing receptor 2 of Homo sapiens (Human).